The sequence spans 293 residues: Pyridoxal 5'-phosphate synthase subunit PdxS (293 aa).

D-ribose 5-phosphate is bound at residue Asp23. Lys80 (schiff-base intermediate with D-ribose 5-phosphate) is an active-site residue. Gly152 provides a ligand contact to D-ribose 5-phosphate. Position 164 (Arg164) interacts with D-glyceraldehyde 3-phosphate. D-ribose 5-phosphate is bound by residues Gly213 and 234–235 (GS).

It belongs to the PdxS/SNZ family. In terms of assembly, in the presence of PdxT, forms a dodecamer of heterodimers.

It catalyses the reaction aldehydo-D-ribose 5-phosphate + D-glyceraldehyde 3-phosphate + L-glutamine = pyridoxal 5'-phosphate + L-glutamate + phosphate + 3 H2O + H(+). It functions in the pathway cofactor biosynthesis; pyridoxal 5'-phosphate biosynthesis. Its function is as follows. Catalyzes the formation of pyridoxal 5'-phosphate from ribose 5-phosphate (RBP), glyceraldehyde 3-phosphate (G3P) and ammonia. The ammonia is provided by the PdxT subunit. Can also use ribulose 5-phosphate and dihydroxyacetone phosphate as substrates, resulting from enzyme-catalyzed isomerization of RBP and G3P, respectively. This chain is Pyridoxal 5'-phosphate synthase subunit PdxS, found in Roseiflexus castenholzii (strain DSM 13941 / HLO8).